A 460-amino-acid polypeptide reads, in one-letter code: ATP synthase subunit beta (460 aa).

150 to 157 contacts ATP; sequence GGAGVGKT.

The protein belongs to the ATPase alpha/beta chains family. In terms of assembly, F-type ATPases have 2 components, CF(1) - the catalytic core - and CF(0) - the membrane proton channel. CF(1) has five subunits: alpha(3), beta(3), gamma(1), delta(1), epsilon(1). CF(0) has three main subunits: a(1), b(2) and c(9-12). The alpha and beta chains form an alternating ring which encloses part of the gamma chain. CF(1) is attached to CF(0) by a central stalk formed by the gamma and epsilon chains, while a peripheral stalk is formed by the delta and b chains.

The protein localises to the cell inner membrane. It carries out the reaction ATP + H2O + 4 H(+)(in) = ADP + phosphate + 5 H(+)(out). In terms of biological role, produces ATP from ADP in the presence of a proton gradient across the membrane. The catalytic sites are hosted primarily by the beta subunits. The polypeptide is ATP synthase subunit beta (Pectobacterium atrosepticum (strain SCRI 1043 / ATCC BAA-672) (Erwinia carotovora subsp. atroseptica)).